The chain runs to 341 residues: Methionine import ATP-binding protein MetN 2 (341 aa).

The ABC transporter domain occupies I2 to V241. Residue G38–S45 participates in ATP binding.

The protein belongs to the ABC transporter superfamily. Methionine importer (TC 3.A.1.24) family. The complex is composed of two ATP-binding proteins (MetN), two transmembrane proteins (MetI) and a solute-binding protein (MetQ).

The protein resides in the cell membrane. The enzyme catalyses L-methionine(out) + ATP + H2O = L-methionine(in) + ADP + phosphate + H(+). It catalyses the reaction D-methionine(out) + ATP + H2O = D-methionine(in) + ADP + phosphate + H(+). Part of the ABC transporter complex MetNIQ involved in methionine import. Responsible for energy coupling to the transport system. This is Methionine import ATP-binding protein MetN 2 from Bacillus thuringiensis subsp. konkukian (strain 97-27).